Consider the following 161-residue polypeptide: RNA pyrophosphohydrolase (161 aa).

In terms of domain architecture, Nudix hydrolase spans 6-149 (GYRPNVGIIL…KREVYRRAMR (144 aa)). The Nudix box motif lies at 38–59 (GGIKKDESPEEALFRELKEEVG).

The protein belongs to the Nudix hydrolase family. RppH subfamily. A divalent metal cation serves as cofactor.

Its function is as follows. Accelerates the degradation of transcripts by removing pyrophosphate from the 5'-end of triphosphorylated RNA, leading to a more labile monophosphorylated state that can stimulate subsequent ribonuclease cleavage. The protein is RNA pyrophosphohydrolase of Hahella chejuensis (strain KCTC 2396).